Consider the following 167-residue polypeptide: MATMMAMSSFAGAAVLPRGSARSLPALGRRTLVVRAQTEGPNAPPPNKPKASTSIWDAMAFSGPAPERINGRLAMVGFVTALAVEAGRGDGLLSQLGSGTGQAWFAYTVAMLSMASLVPLLQGESAEGRAGAIMNANAELWNGRFAMIGLVALAATEIITGTPFINV.

Residues 1–33 constitute a chloroplast transit peptide; the sequence is MATMMAMSSFAGAAVLPRGSARSLPALGRRTLV. 2 consecutive transmembrane segments (helical) span residues 101–121 and 145–165; these read GQAW…VPLL and FAMI…TPFI.

This sequence belongs to the ELIP/psbS family.

It is found in the plastid. The protein localises to the chloroplast membrane. Its function is as follows. Probably involved in the integration of pigments into the mature pigment-protein complexes. This Hordeum vulgare (Barley) protein is Low molecular mass early light-inducible protein HV60, chloroplastic.